Reading from the N-terminus, the 488-residue chain is Glutamate--tRNA ligase (488 aa).

The short motif at Pro-9 to Gly-19 is the 'HIGH' region element. The Zn(2+) site is built by Cys-112, Cys-114, Cys-139, and His-141. The 'KMSKS' region signature appears at Lys-256–Arg-260. Lys-259 is a binding site for ATP.

It belongs to the class-I aminoacyl-tRNA synthetase family. Glutamate--tRNA ligase type 1 subfamily. As to quaternary structure, monomer. It depends on Zn(2+) as a cofactor.

It localises to the cytoplasm. It catalyses the reaction tRNA(Glu) + L-glutamate + ATP = L-glutamyl-tRNA(Glu) + AMP + diphosphate. Functionally, catalyzes the attachment of glutamate to tRNA(Glu) in a two-step reaction: glutamate is first activated by ATP to form Glu-AMP and then transferred to the acceptor end of tRNA(Glu). The polypeptide is Glutamate--tRNA ligase (Elusimicrobium minutum (strain Pei191)).